The primary structure comprises 296 residues: Acetylglutamate kinase (296 aa).

Residues 69–70, arginine 91, and asparagine 193 contribute to the substrate site; that span reads GG.

Belongs to the acetylglutamate kinase family. ArgB subfamily.

It is found in the cytoplasm. It carries out the reaction N-acetyl-L-glutamate + ATP = N-acetyl-L-glutamyl 5-phosphate + ADP. It functions in the pathway amino-acid biosynthesis; L-arginine biosynthesis; N(2)-acetyl-L-ornithine from L-glutamate: step 2/4. In terms of biological role, catalyzes the ATP-dependent phosphorylation of N-acetyl-L-glutamate. This Verminephrobacter eiseniae (strain EF01-2) protein is Acetylglutamate kinase.